The following is a 217-amino-acid chain: Small ribosomal subunit protein uS3 (217 aa).

Positions 38–106 (IRKFIDNELK…KVHINVIEIK (69 aa)) constitute a KH type-2 domain.

The protein belongs to the universal ribosomal protein uS3 family. Part of the 30S ribosomal subunit. Forms a tight complex with proteins S10 and S14.

Its function is as follows. Binds the lower part of the 30S subunit head. Binds mRNA in the 70S ribosome, positioning it for translation. This chain is Small ribosomal subunit protein uS3, found in Staphylococcus haemolyticus (strain JCSC1435).